Here is a 170-residue protein sequence, read N- to C-terminus: Putative apoptosis inhibitor ORF87 (170 aa).

BIR repeat units lie at residues 22-92 and 104-169; these read RIKS…PVGK and RLKS…KLSS.

May act as an apoptosis inhibitor. This Ostreid herpesvirus 1 (isolate France) (OsHV-1) protein is Putative apoptosis inhibitor ORF87.